The chain runs to 454 residues: Ribosomal protein uS12 methylthiotransferase RimO (454 aa).

Residues 14 to 125 (SKVAFSHVGC…IAKVLDRVEK (112 aa)) form the MTTase N-terminal domain. 6 residues coordinate [4Fe-4S] cluster: C23, C59, C88, C163, C167, and C170. Positions 149-378 (DKNKFVAYLR…ISVQQNISKD (230 aa)) constitute a Radical SAM core domain. The TRAM domain maps to 381 to 452 (QSYVGSKMKI…EYDLYGETIK (72 aa)).

Belongs to the methylthiotransferase family. RimO subfamily. It depends on [4Fe-4S] cluster as a cofactor.

The protein resides in the cytoplasm. It carries out the reaction L-aspartate(89)-[ribosomal protein uS12]-hydrogen + (sulfur carrier)-SH + AH2 + 2 S-adenosyl-L-methionine = 3-methylsulfanyl-L-aspartate(89)-[ribosomal protein uS12]-hydrogen + (sulfur carrier)-H + 5'-deoxyadenosine + L-methionine + A + S-adenosyl-L-homocysteine + 2 H(+). Functionally, catalyzes the methylthiolation of an aspartic acid residue of ribosomal protein uS12. This is Ribosomal protein uS12 methylthiotransferase RimO from Prochlorococcus marinus (strain MIT 9312).